A 270-amino-acid chain; its full sequence is Beta carbonic anhydrase 1 (270 aa).

Zn(2+)-binding residues include C39, D41, H105, and C108.

This sequence belongs to the beta-class carbonic anhydrase family. Zn(2+) serves as cofactor.

It carries out the reaction hydrogencarbonate + H(+) = CO2 + H2O. Its function is as follows. Reversible hydration of carbon dioxide. The protein is Beta carbonic anhydrase 1 of Caenorhabditis briggsae.